The sequence spans 199 residues: uncharacterized protein (199 aa).

The next 4 helical transmembrane spans lie at 40 to 60 (LLICVFKFCSLFMFSKFFCFL), 86 to 106 (VLTGASSSFTTTAVVAATFPF), 117 to 137 (TSWPLFIMLMSSSALPLLTSS), and 166 to 186 (FLLAMSMFVDFFSHPCFALIL).

The protein localises to the membrane. This is an uncharacterized protein from Saccharomyces cerevisiae (strain ATCC 204508 / S288c) (Baker's yeast).